A 353-amino-acid polypeptide reads, in one-letter code: Inactive ubiquitin thioesterase OTULINL (353 aa).

The segment at 1–80 (MEAPRSAPRE…KWWIGYLQRK (80 aa)) is required for membrane binding. The OTU domain maps to 125–353 (KCVRAVKRDN…NGHHYHIPVF (229 aa)).

Belongs to the peptidase C65 family. Otulin subfamily. As to quaternary structure, does not bind ubiquitin or ubiquitin-like proteins.

Its subcellular location is the cytoplasm. The protein resides in the endoplasmic reticulum membrane. The protein localises to the nucleus envelope. In terms of biological role, lacks deubiquitinase activity. This is Inactive ubiquitin thioesterase OTULINL from Mus musculus (Mouse).